The following is a 428-amino-acid chain: GTPase HflX (428 aa).

The Hflx-type G domain occupies 214–374 (PVVAIVGYTN…AIERELFKET (161 aa)). Residues 220-227 (GYTNAGKS), 245-249 (FATLD), 267-270 (DTVG), 333-336 (NKID), and 352-354 (SAK) contribute to the GTP site. The Mg(2+) site is built by S227 and T247.

The protein belongs to the TRAFAC class OBG-HflX-like GTPase superfamily. HflX GTPase family. As to quaternary structure, monomer. Associates with the 50S ribosomal subunit. The cofactor is Mg(2+).

The protein resides in the cytoplasm. GTPase that associates with the 50S ribosomal subunit and may have a role during protein synthesis or ribosome biogenesis. In Caldanaerobacter subterraneus subsp. tengcongensis (strain DSM 15242 / JCM 11007 / NBRC 100824 / MB4) (Thermoanaerobacter tengcongensis), this protein is GTPase HflX.